An 89-amino-acid chain; its full sequence is Small ribosomal subunit protein uS15 (89 aa).

Over residues 1 to 21 (MSITTEEKARVMKEYGTKDGD) the composition is skewed to basic and acidic residues. Positions 1–24 (MSITTEEKARVMKEYGTKDGDTGS) are disordered.

Belongs to the universal ribosomal protein uS15 family. As to quaternary structure, part of the 30S ribosomal subunit. Forms a bridge to the 50S subunit in the 70S ribosome, contacting the 23S rRNA.

Its function is as follows. One of the primary rRNA binding proteins, it binds directly to 16S rRNA where it helps nucleate assembly of the platform of the 30S subunit by binding and bridging several RNA helices of the 16S rRNA. In terms of biological role, forms an intersubunit bridge (bridge B4) with the 23S rRNA of the 50S subunit in the ribosome. This chain is Small ribosomal subunit protein uS15, found in Ruegeria pomeroyi (strain ATCC 700808 / DSM 15171 / DSS-3) (Silicibacter pomeroyi).